Reading from the N-terminus, the 123-residue chain is Thioredoxin domain-containing protein 17 (123 aa).

Ala-2 carries the post-translational modification N-acetylalanine. A Thioredoxin domain is found at 41–123 (SWCPDCVQAE…NLVEMLFSED (83 aa)). Residues Cys-43 and Cys-46 each act as nucleophile in the active site. An intrachain disulfide couples Cys-43 to Cys-46.

It belongs to the thioredoxin family. In terms of assembly, interacts with TRXR1 and DYNLL1/DNCL1. The oxidized protein is reduced by TRXR1. Ubiquitously expressed in cell lines.

Its subcellular location is the cytoplasm. In terms of biological role, disulfide reductase. May participate in various redox reactions through the reversible oxidation of its active center dithiol to a disulfide and catalyze dithiol-disulfide exchange reactions. Modulates TNF-alpha signaling and NF-kappa-B activation. Has peroxidase activity and may contribute to the elimination of cellular hydrogen peroxide. The chain is Thioredoxin domain-containing protein 17 (TXNDC17) from Homo sapiens (Human).